The sequence spans 291 residues: Serine hydrolase BPHL (291 aa).

The N-terminal stretch at 1–37 (MATATVRPAAQRLRLLLSPLKSRICVPQAEPVATFGT) is a signal peptide. The AB hydrolase-1 domain maps to 62 to 173 (AILLLPGMLG…ANAYVTEEDS (112 aa)). K74 is modified (N6-acetyllysine; alternate). K74 carries the post-translational modification N6-succinyllysine; alternate. N6-acetyllysine is present on residues K86 and K119. At K126 the chain carries N6-acetyllysine; alternate. At K126 the chain carries N6-succinyllysine; alternate. The Nucleophile role is filled by S139. K184 carries the N6-succinyllysine modification. K191 bears the N6-acetyllysine; alternate mark. K191 is subject to N6-succinyllysine; alternate. K217 is modified (N6-acetyllysine). A Mg(2+)-binding site is contributed by E221. Position 243 is an N6-acetyllysine (K243). Catalysis depends on D244, which acts as the Charge relay system. Residues K260 and K271 each carry the N6-acetyllysine; alternate modification. Residues K260 and K271 each carry the N6-succinyllysine; alternate modification. The Charge relay system role is filled by H272.

The protein belongs to the AB hydrolase superfamily. Lipase family. In terms of assembly, monomer. May also form homodimers.

The protein localises to the mitochondrion. The enzyme catalyses L-homocysteine thiolactone + H2O = L-homocysteine + H(+). It catalyses the reaction valacyclovir + H2O = acyclovir + L-valine + H(+). Functionally, specific alpha-amino acid ester serine hydrolase that prefers small, hydrophobic, and aromatic side chains and does not have a stringent requirement for the leaving group other than preferring a primary alcohol. Has homocysteine-thiolactonase activity (in vitro) and may play a significant role in the detoxification of homocysteine thiolactone in vivo. Catalyzes the hydrolytic activation of amino acid ester prodrugs of nucleoside analogs such as valacyclovir and valganciclovir, converting them into their active forms (acyclovir and ganciclovir). The chain is Serine hydrolase BPHL (Bphl) from Mus musculus (Mouse).